Reading from the N-terminus, the 453-residue chain is Probable glycine dehydrogenase (decarboxylating) subunit 1 (453 aa).

It belongs to the GcvP family. N-terminal subunit subfamily. As to quaternary structure, the glycine cleavage system is composed of four proteins: P, T, L and H. In this organism, the P 'protein' is a heterodimer of two subunits.

The catalysed reaction is N(6)-[(R)-lipoyl]-L-lysyl-[glycine-cleavage complex H protein] + glycine + H(+) = N(6)-[(R)-S(8)-aminomethyldihydrolipoyl]-L-lysyl-[glycine-cleavage complex H protein] + CO2. The glycine cleavage system catalyzes the degradation of glycine. The P protein binds the alpha-amino group of glycine through its pyridoxal phosphate cofactor; CO(2) is released and the remaining methylamine moiety is then transferred to the lipoamide cofactor of the H protein. The protein is Probable glycine dehydrogenase (decarboxylating) subunit 1 of Nitrosomonas europaea (strain ATCC 19718 / CIP 103999 / KCTC 2705 / NBRC 14298).